A 100-amino-acid polypeptide reads, in one-letter code: UPF0213 protein YhbQ (100 aa).

The GIY-YIG domain maps to 2 to 77 (TPWFLYLIRT…KQLTKRQKER (76 aa)).

It belongs to the UPF0213 family.

The sequence is that of UPF0213 protein YhbQ from Escherichia coli O7:K1 (strain IAI39 / ExPEC).